A 767-amino-acid chain; its full sequence is ATP-dependent rRNA helicase SPB4 (767 aa).

Residues 28-56 (WTKLTPPLTPWVVSLLSDLGFGQMTPVQA) carry the Q motif motif. Residues 59–291 (IPLFVSHKDV…RIGLRNPVRV (233 aa)) enclose the Helicase ATP-binding domain. An ATP-binding site is contributed by 72–79 (AVTGSGKT). Residues 132-176 (HVQAQQQQDQDEQDEQDEQEAQSDSDTDPDASTALNNKRKSSNHL) form a disordered region. Acidic residues predominate over residues 140 to 160 (DQDEQDEQDEQEAQSDSDTDP). Residues 239-242 (DEAD) carry the DEAD box motif. The region spanning 330 to 507 (QLARIVLFES…ILEPAEDDAS (178 aa)) is the Helicase C-terminal domain. The interval 609 to 767 (KLSGDQAKPP…NADAEPFFVI (159 aa)) is disordered. Basic and acidic residues-rich tracts occupy residues 636-645 (CDSHDSDDAH) and 659-681 (LERE…ANRE). Residues 654 to 746 (KNKRKLEREK…RANSDNDDAM (93 aa)) are a coiled coil. Residues 690–700 (LKTQAAESSSN) are compositionally biased toward polar residues. Residues 701–746 (AKHEPPQDDHDEHDWNDDYRKLQKDKRQQRQRNKADRANSDNDDAM) are compositionally biased toward basic and acidic residues. Residues 749–761 (NSDSDAAAANADA) are compositionally biased toward low complexity.

This sequence belongs to the DEAD box helicase family. DDX55/SPB4 subfamily. As to quaternary structure, component of pre-60S ribosomal complexes.

The protein localises to the nucleus. Its subcellular location is the nucleolus. The catalysed reaction is ATP + H2O = ADP + phosphate + H(+). ATP-binding RNA helicase involved in the biogenesis of 60S ribosomal subunits. Binds 90S pre-ribosomal particles and dissociates from pre-60S ribosomal particles after processing of 27SB pre-rRNA. Required for the normal formation of 18S rRNA through the processing of pre-rRNAs at sites A0, A1 and A2, and the normal formation of 25S and 5.8S rRNAs through the processing of pre-rRNAs at sites C1 and C2. In Mycosarcoma maydis (Corn smut fungus), this protein is ATP-dependent rRNA helicase SPB4.